Consider the following 249-residue polypeptide: Probable transcriptional regulatory protein A1S_1496 (249 aa).

Belongs to the TACO1 family.

It is found in the cytoplasm. The chain is Probable transcriptional regulatory protein A1S_1496 from Acinetobacter baumannii (strain ATCC 17978 / DSM 105126 / CIP 53.77 / LMG 1025 / NCDC KC755 / 5377).